The primary structure comprises 1158 residues: Voltage-gated inwardly rectifying potassium channel KCNH2 (1158 aa).

The Cytoplasmic portion of the chain corresponds to 1–402 (MPVRRGHVAP…RIHRWTILHY (402 aa)). The PAS domain maps to 17-88 (TIIRKFEGQS…AAQIAQALLG (72 aa)). Positions 92–144 (RKVEIAFYRKDGSCFLCLVDVVPVKNEDGAVIMFILNFEVVMEKDMVGSPTHD) constitute a PAC domain. A disordered region spans residues 232–314 (RALVGSSSPP…GAMHPLRGGL (83 aa)). Ser239 is subject to Phosphoserine. The segment covering 258 to 269 (PDASGSSCSLAR) has biased composition (polar residues). 4 positions are modified to phosphoserine: Ser283, Ser284, Ser319, and Ser350. The chain crosses the membrane as a helical span at residues 403–423 (SPFKAVWDWLILLLVIYTAVF). Residues 424–449 (TPYSAAFLLKETEEGPPAPDCGYACQ) are Extracellular-facing. A helical transmembrane segment spans residues 450-470 (PLAVVDFIVDIMFIVDILINF). The Cytoplasmic segment spans residues 471-494 (RTTYVNANEEVVSHPGRIAVHYFK). The chain crosses the membrane as a helical span at residues 495 to 515 (GWFLIDMVAAIPFDLLIFGSG). Residues 516-519 (SEEL) lie on the Extracellular side of the membrane. A helical; Voltage-sensor transmembrane segment spans residues 520–540 (IGLLKTARLLRLVRVARKLDR). The Cytoplasmic segment spans residues 541-546 (YSEYGA). A helical transmembrane segment spans residues 547–567 (AVLFLLMCTFALIAHWLACIW). Topologically, residues 568 to 610 (YAIGNMEQPHMDSRIGWLHNLGDQIGKPYNSSGLGGPSIKDKY) are extracellular. Residue Asn597 is glycosylated (N-linked (GlcNAc...) asparagine). An intramembrane region (pore-forming) is located at residues 611-631 (VTALYFTFSSLTSVGFGNVSP). The Selectivity filter motif lies at 623–628 (SVGFGN). The Extracellular segment spans residues 632 to 637 (NTNSEK). Residues 638-658 (IFSICVMLIGSLMYASIFGNV) traverse the membrane as a helical segment. The Cytoplasmic segment spans residues 659-1158 (SAIIQRLYSG…LHRHGSDPGS (500 aa)). The interval 741 to 841 (PFRGATKGCL…IHRDDLLEVL (101 aa)) is cNMP-binding domain. Residues 869-987 (GSPGSAELEG…KSSDTCNPLS (119 aa)) are disordered. Phosphoserine occurs at positions 870 and 873. A compositionally biased stretch (basic residues) spans 882-891 (RQRKRKLSFR). Positions 910 to 926 (GRAGAGPSGRGRPGGPW) are enriched in gly residues. The segment covering 927–938 (GESPSSGPSSPE) has biased composition (low complexity). Residues 959–969 (SPRPPGEPPGG) are compositionally biased toward pro residues. Arg1013 bears the Omega-N-methylarginine mark. Positions 1034–1061 (RGDVEGRLDALQRQLNRLETRLSADMAT) form a coiled coil. The tract at residues 1116–1158 (FEELPPGAPELPQDGPPRRLSLPGQLGALTSQPLHRHGSDPGS) is disordered. Ser1136 carries the phosphoserine modification.

The protein belongs to the potassium channel family. H (Eag) (TC 1.A.1.20) subfamily. Kv11.1/KCNH2 sub-subfamily. As to quaternary structure, the potassium channel is probably composed of a homo- or heterotetrameric complex of pore-forming alpha subunits that can associate with modulating beta subunits. Interacts with DNAJB12 and DNAJB14; chaperones DNAJB12 and DNAJB14 promote tetramerization. Heteromultimer with KCNH6/ERG2 and KCNH7/ERG3. Interacts with ALG10B. Forms a stable complex with KCNE1 or KCNE2, and that this heteromultimerization regulates Inward rectifier potassium channel activity. Interacts with CANX. The core-glycosylated, but not the fully glycosylated form interacts with RNF207. Interacts with NDFIP1 and NDFIP2; this interaction decreases the cell membrane expression by targeting KCNH2, through interaction with NEDD4L, for the degradation through the multivesicular bodies (MVBs)-lysosomal pathway. In terms of processing, phosphorylated on serine and threonine residues. Phosphorylation by PKA inhibits ion conduction. In terms of tissue distribution, highly expressed in left and right atria of the heart, in cortex and hippocampus; detected at intermediate levels in left and right ventricle, Purkinje fibers, cerebellum, thalamus and basal ganglia; detected at low levels in liver, spleen and kidney.

The protein resides in the cell membrane. The catalysed reaction is K(+)(in) = K(+)(out). Functionally, pore-forming (alpha) subunit of voltage-gated inwardly rectifying potassium channel. Characterized by unusual gating kinetics by producing relatively small outward currents during membrane depolarization and large inward currents during subsequent repolarization which reflect a rapid inactivation during depolarization and quick recovery from inactivation but slow deactivation (closing) during repolarization. Channel properties are modulated by cAMP and subunit assembly. Forms a stable complex with KCNE1 or KCNE2, and that this heteromultimerization regulates inward rectifier potassium channel activity. This is Voltage-gated inwardly rectifying potassium channel KCNH2 from Canis lupus familiaris (Dog).